Reading from the N-terminus, the 934-residue chain is Bifunctional uridylyltransferase/uridylyl-removing enzyme (934 aa).

The tract at residues 1 to 379 (MSAHDLKLEE…TFSRRKRKLS (379 aa)) is uridylyltransferase. A uridylyl-removing region spans residues 380 to 736 (DDGAFISENH…AKPHAFEAVT (357 aa)). Positions 496 to 613 (VDEHLLRCIA…IDFADTVQTM (118 aa)) constitute an HD domain. ACT domains follow at residues 737–818 (EITV…DMLA) and 848–931 (VIEV…RSPQ).

Belongs to the GlnD family. Requires Mg(2+) as cofactor.

It catalyses the reaction [protein-PII]-L-tyrosine + UTP = [protein-PII]-uridylyl-L-tyrosine + diphosphate. The catalysed reaction is [protein-PII]-uridylyl-L-tyrosine + H2O = [protein-PII]-L-tyrosine + UMP + H(+). Uridylyltransferase (UTase) activity is inhibited by glutamine, while glutamine activates uridylyl-removing (UR) activity. Functionally, modifies, by uridylylation and deuridylylation, the PII regulatory proteins (GlnB and homologs), in response to the nitrogen status of the cell that GlnD senses through the glutamine level. Under low glutamine levels, catalyzes the conversion of the PII proteins and UTP to PII-UMP and PPi, while under higher glutamine levels, GlnD hydrolyzes PII-UMP to PII and UMP (deuridylylation). Thus, controls uridylylation state and activity of the PII proteins, and plays an important role in the regulation of nitrogen assimilation and metabolism. The polypeptide is Bifunctional uridylyltransferase/uridylyl-removing enzyme (Brucella abortus (strain S19)).